The primary structure comprises 285 residues: Nucleotide-binding protein HI_1146 (285 aa).

8–15 serves as a coordination point for ATP; the sequence is GRSGAGKS. 56–59 contacts GTP; it reads DIRN.

It belongs to the RapZ-like family.

Its function is as follows. Displays ATPase and GTPase activities. This chain is Nucleotide-binding protein HI_1146, found in Haemophilus influenzae (strain ATCC 51907 / DSM 11121 / KW20 / Rd).